A 342-amino-acid chain; its full sequence is Mitogen-activated protein kinase kinase kinase 20 (342 aa).

Positions 3–268 (WVRGETIGFG…AEMLLNHSFV (266 aa)) constitute a Protein kinase domain. Position 9 to 17 (9 to 17 (IGFGTFSTV)) interacts with ATP. Ser18 carries the phosphoserine modification. At Thr19 the chain carries Phosphothreonine. Lys36 contributes to the ATP binding site. 2 positions are modified to phosphotyrosine: Tyr41 and Tyr66. Phosphoserine is present on residues Ser93 and Ser114. Asp131 acts as the Proton acceptor in catalysis. Residues 285–342 (KDEDKVLMSPKCPFEFDDWDSFTLDSNPSFDSPVERLGSLVSGSIPDWSVGGSWLTVR) form a required for MKK3 binding region.

The protein belongs to the protein kinase superfamily. Ser/Thr protein kinase family. As to quaternary structure, interacts with MKK3 and MPK18 via its C-terminal domain. Binds to MKK5. Post-translationally, autophosphorylates; active in phosphorylated state. Dephosphorylated by ABI1. Expressed in roots, seedlings, leaves, flower buds, flowers and siliques.

Its subcellular location is the nucleus. It is found in the cytoplasm. It carries out the reaction L-seryl-[protein] + ATP = O-phospho-L-seryl-[protein] + ADP + H(+). The catalysed reaction is L-threonyl-[protein] + ATP = O-phospho-L-threonyl-[protein] + ADP + H(+). With respect to regulation, activated through serine, threonine and tyrosine phosphorylation, especially upon abscisic acid (ABA) treatment. Restricted activity by ABI1-mediated dephosphorylation. Its function is as follows. Mitogen-activated protein kinase kinase (MAPKK) that phosphorylates both MKK3 and MPK18 and regulate two separate signaling pathways involved in root microtubule functions. MAPKK which regulates abscisic acid (ABA) responses in a MAPKKK20-MKK5-MPK6 cascade involved in root growth (e.g. root cell division and elongation) and stomatal response, probably via MKK5 activation by protein phosphorylation and subsequent activation of MAPK6 by MKK5. Involved in various abiotic stresses (e.g. osmotic stress, cold and hydrogen peroxide) responses by phosphorylating and thus regulating MPK6 activity, in an ABA-independent manner. This is Mitogen-activated protein kinase kinase kinase 20 from Arabidopsis thaliana (Mouse-ear cress).